A 467-amino-acid polypeptide reads, in one-letter code: MSDDTTQIEPAMAQETSPRANTRKVFVKTYGCQMNVYDSQRMADSLAAEGYVATDTPDDADLVLLNTCHIREKASEKLYSALGRLRKMKDARAADGKELTIGVAGCVAQAEGQEILRRAPNVDLVIGPQTYHRLPNALARVRGGEKVVETDYAIEDKFEHLPAPRREETRKRGVSAFLTVQEGCDKFCTFCVVPYTRGSEVSRSVKQIVAEAERLADSGVRELTLLGQNVNAWHGEGEDGREWGLGELLFRLARIPGIARLRYTTSHPRDMDDSLIAAHRDLRQLMPYLHLPVQSGSDRILKAMNRRHKADEYLRLIERIRNVRPDMALSGDFIVGFPGETDQDFEDTMQLVRDVNYAQAYSFKYSPRLGTPGADLDDHVEEAVKDERLQRLQALLSAQQYAFQDSMIGRKMDVLLEKPGREAGQMVGRSPWLLPVIIDDNKDRVGDIIHVKIVSTGTNSLIAQKLA.

Residues 1 to 20 are disordered; the sequence is MSDDTTQIEPAMAQETSPRA. In terms of domain architecture, MTTase N-terminal spans 23-143; the sequence is RKVFVKTYGC…LPNALARVRG (121 aa). Cys32, Cys68, Cys106, Cys184, Cys188, and Cys191 together coordinate [4Fe-4S] cluster. The Radical SAM core domain occupies 170–402; that stretch reads RKRGVSAFLT…QALLSAQQYA (233 aa). Residues 405–467 enclose the TRAM domain; that stretch reads DSMIGRKMDV…TNSLIAQKLA (63 aa).

This sequence belongs to the methylthiotransferase family. MiaB subfamily. Monomer. [4Fe-4S] cluster is required as a cofactor.

The protein localises to the cytoplasm. The enzyme catalyses N(6)-dimethylallyladenosine(37) in tRNA + (sulfur carrier)-SH + AH2 + 2 S-adenosyl-L-methionine = 2-methylsulfanyl-N(6)-dimethylallyladenosine(37) in tRNA + (sulfur carrier)-H + 5'-deoxyadenosine + L-methionine + A + S-adenosyl-L-homocysteine + 2 H(+). Functionally, catalyzes the methylthiolation of N6-(dimethylallyl)adenosine (i(6)A), leading to the formation of 2-methylthio-N6-(dimethylallyl)adenosine (ms(2)i(6)A) at position 37 in tRNAs that read codons beginning with uridine. The polypeptide is tRNA-2-methylthio-N(6)-dimethylallyladenosine synthase (Brucella suis (strain ATCC 23445 / NCTC 10510)).